A 195-amino-acid chain; its full sequence is Probable GTP-binding protein EngB (195 aa).

Residues glutamate 24–leucine 195 form the EngB-type G domain. GTP-binding positions include glycine 32 to serine 39, glycine 59 to leucine 63, aspartate 77 to glycine 80, threonine 144 to aspartate 147, and phenylalanine 176 to serine 178. Serine 39 and threonine 61 together coordinate Mg(2+).

The protein belongs to the TRAFAC class TrmE-Era-EngA-EngB-Septin-like GTPase superfamily. EngB GTPase family. Requires Mg(2+) as cofactor.

Necessary for normal cell division and for the maintenance of normal septation. The protein is Probable GTP-binding protein EngB of Streptococcus pneumoniae (strain P1031).